We begin with the raw amino-acid sequence, 310 residues long: Homeobox protein Hox-A13a (310 aa).

A DNA-binding region (homeobox) is located at residues 244–303; sequence GRKKRVPYTKVQLKELEREYATNKFITKDKRRRISAQTNLSERQVTIWFQNRRVKEKKVV.

Belongs to the Abd-B homeobox family.

It localises to the nucleus. In terms of biological role, sequence-specific transcription factor which is part of a developmental regulatory system that provides cells with specific positional identities on the anterior-posterior axis. This Danio rerio (Zebrafish) protein is Homeobox protein Hox-A13a (hoxa13a).